A 244-amino-acid polypeptide reads, in one-letter code: Prolactin-7D1 (244 aa).

The N-terminal stretch at Met-1–Ser-30 is a signal peptide. 2 disulfide bridges follow: Cys-99-Cys-215 and Cys-232-Cys-240.

Belongs to the somatotropin/prolactin family.

The protein resides in the secreted. This Mus musculus (Mouse) protein is Prolactin-7D1 (Prl7d1).